Consider the following 192-residue polypeptide: E3 ubiquitin-protein ligase RNF185 (192 aa).

Over residues 1–14 (MASKGPSASASTEN) the composition is skewed to polar residues. The interval 1 to 30 (MASKGPSASASTENSSAGGPSGSSNGTGES) is disordered. At 1–130 (MASKGPSASA…GGFQGFGFGD (130 aa)) the chain is on the cytoplasmic side. The span at 15 to 27 (SSAGGPSGSSNGT) shows a compositional bias: low complexity. The required for ubiquitin ligase activity and protection against ER stress-induced cell death stretch occupies residues 29–80 (ESGGQDSTFECNICLDTAKDAVISLCGHLFCWPCLHQWLETRPNRQVCPVCK). The RING-type zinc-finger motif lies at 39–80 (CNICLDTAKDAVISLCGHLFCWPCLHQWLETRPNRQVCPVCK). The interval 90–123 (PLYGRGSTGQQDPREKTPPRPQGQRPEPENRGGF) is disordered. Residues 131–151 (GGFQMSFGIGAFPFGIFATAF) form a helical membrane-spanning segment. The Mitochondrial intermembrane segment spans residues 152–171 (NINDGRPPPAVPGTPQYVDE). The chain crosses the membrane as a helical span at residues 172 to 192 (QFLSRLFLFVALVIMFWLLIA).

As to quaternary structure, interacts with ATG5 and BNIP1.

It is found in the mitochondrion outer membrane. It localises to the endoplasmic reticulum membrane. The catalysed reaction is S-ubiquitinyl-[E2 ubiquitin-conjugating enzyme]-L-cysteine + [acceptor protein]-L-lysine = [E2 ubiquitin-conjugating enzyme]-L-cysteine + N(6)-ubiquitinyl-[acceptor protein]-L-lysine.. It participates in protein modification; protein ubiquitination. In terms of biological role, E3 ubiquitin-protein ligase that regulates selective mitochondrial autophagy by mediating 'Lys-63'-linked polyubiquitination of BNIP1. Acts in the endoplasmic reticulum (ER)-associated degradation (ERAD) pathway, which targets misfolded proteins that accumulate in the endoplasmic reticulum (ER) for ubiquitination and subsequent proteasome-mediated degradation. Protects cells from ER stress-induced apoptosis. Responsible for the cotranslational ubiquitination and degradation of CFTR in the ERAD pathway. Also acts as a regulator of the innate antiviral response by catalyzing 'Lys-27'-linked polyubiquitination of CGAS, thereby promoting CGAS cyclic GMP-AMP synthase activity. Preferentially associates with the E2 enzymes UBE2J1 and UBE2J2. This chain is E3 ubiquitin-protein ligase RNF185 (Rnf185), found in Rattus norvegicus (Rat).